The primary structure comprises 328 residues: DNA-directed RNA polymerase subunit alpha (328 aa).

Residues 1 to 232 (MSTQGFLKPR…DQISVFAALE (232 aa)) form an alpha N-terminal domain (alpha-NTD) region. The tract at residues 248–328 (IDPVLLRPVD…NWPPLGLERP (81 aa)) is alpha C-terminal domain (alpha-CTD).

This sequence belongs to the RNA polymerase alpha chain family. In terms of assembly, homodimer. The RNAP catalytic core consists of 2 alpha, 1 beta, 1 beta' and 1 omega subunit. When a sigma factor is associated with the core the holoenzyme is formed, which can initiate transcription.

It carries out the reaction RNA(n) + a ribonucleoside 5'-triphosphate = RNA(n+1) + diphosphate. Its function is as follows. DNA-dependent RNA polymerase catalyzes the transcription of DNA into RNA using the four ribonucleoside triphosphates as substrates. The chain is DNA-directed RNA polymerase subunit alpha from Bordetella petrii (strain ATCC BAA-461 / DSM 12804 / CCUG 43448).